Here is a 644-residue protein sequence, read N- to C-terminus: Polyglycine hydrolase (644 aa).

A signal peptide spans 1–23 (MYTSRSLFSTLASCLSLATLVAS). N-linked (GlcNAc...) asparagine glycans are attached at residues N100, N144, N159, N244, and N340. C149 and C183 are joined by a disulfide. The active site involves S369. N-linked (GlcNAc...) asparagine glycosylation is found at N389, N410, N443, and N486.

This sequence belongs to the peptidase S12 family.

Its subcellular location is the secreted. The catalysed reaction is a glycyl-glycyl-[protein] + H2O = N-terminal glycyl-[protein] + [protein]-C-terminal glycine. Its activity is regulated as follows. Not inhibited by phenylmethylsulfonyl fluoride (PMSF; serine peptidase class S1 inhibitor), clavulanic acid (beta-lactamase inhibitor) or ampicillin (penicillin-binding protein (PBP) inhibitor). In terms of biological role, serine-type endopeptidase that cleaves Gly-Gly bonds in the polyglycine linker of host plant class IV chitinases to disrupt their chitin-binding, and thereby plays a role in lowering the defense responses of the host to the fungus. Degrades Z.mays Endochitinase A (CHIA). Has low proteolytic activity on Z.mays Endochitinase B (CHIB). In Cochliobolus carbonum (strain 26-R-13) (Maize leaf spot fungus), this protein is Polyglycine hydrolase.